A 401-amino-acid chain; its full sequence is MPSARFGRRGIVLLTLGLVGPCGVGGAAAGSSTGIMALRFLLGFLLAGVDLGVYLMRLELCDPTQRLRVALAGELVGVGGHFLFLGLALVSKDWRFLQRMITAPCILFLFYGWPGLFLESARWLIVKRQIEEAQSVLRILAERNRPHGQMLGEEAQEALQELENTCPLPATSTFSFASLLNYRNIWKNLLILGFTNFIAHAIRHCYQPVGGGGSPSDFYLCSLLASGTAALACVFLGVTVDRFGRRGILLLSMTLTGIASLVLLGLWDYLNDAAITTFSVLGLFSSQASAILSTLLASEVIPTTVRGRGLGLIMALGALGGLSCPAQRLHMGHGAFLQHVVLAACALLCILSIMLLPETKRKLLPEVLRDGELCRRPSLLRQPPPNRCDHVPLLATPNPAL.

A run of 10 helical transmembrane segments spans residues 10 to 30 (GIVLLTLGLVGPCGVGGAAAG), 35 to 55 (IMALRFLLGFLLAGVDLGVYL), 69 to 89 (VALAGELVGVGGHFLFLGLAL), 100 to 120 (MITAPCILFLFYGWPGLFLES), 184 to 203 (NIWKNLLILGFTNFIAHAIR), 218 to 238 (FYLCSLLASGTAALACVFLGV), 247 to 267 (GILLLSMTLTGIASLVLLGLW), 277 to 297 (TFSVLGLFSSQASAILSTLLA), 309 to 329 (GLGLIMALGALGGLSCPAQRL), and 336 to 356 (FLQHVVLAACALLCILSIMLL).

It belongs to the major facilitator (TC 2.A.1) superfamily. Organic cation transporter (TC 2.A.1.19) family. In terms of tissue distribution, widely expressed.

The protein resides in the cell membrane. The protein localises to the vacuole membrane. Its function is as follows. Cell surface receptor for LCN2 (24p3) that plays a key role in iron homeostasis and transport. Able to bind iron-bound LCN2 (holo-24p3), followed by internalization of holo-24p3 and release of iron, thereby increasing intracellular iron concentration and leading to inhibition of apoptosis. Also binds iron-free LCN2 (apo-24p3), followed by internalization of apo-24p3 and its association with an intracellular siderophore, leading to iron chelation and iron transfer to the extracellular medium, thereby reducing intracellular iron concentration and resulting in apoptosis. The polypeptide is Solute carrier family 22 member 17 (Slc22a17) (Mus musculus (Mouse)).